The primary structure comprises 321 residues: Fructose-1,6-bisphosphatase class 1 (321 aa).

Mg(2+)-binding residues include Glu93, Asp114, Leu116, and Asp117. Substrate-binding positions include 117–120 (DGSS), Asn205, Tyr233, and Lys263. Glu269 lines the Mg(2+) pocket.

Belongs to the FBPase class 1 family. As to quaternary structure, homotetramer. The cofactor is Mg(2+).

It localises to the cytoplasm. It catalyses the reaction beta-D-fructose 1,6-bisphosphate + H2O = beta-D-fructose 6-phosphate + phosphate. It functions in the pathway carbohydrate biosynthesis; gluconeogenesis. The sequence is that of Fructose-1,6-bisphosphatase class 1 from Persephonella marina (strain DSM 14350 / EX-H1).